The following is a 368-amino-acid chain: FAD-dependent monooxygenase phomE (368 aa).

Ala11 lines the FAD pocket. Active-site residues include Arg140 and Tyr178. FAD-binding residues include Asp249 and Gly262.

The protein belongs to the paxM FAD-dependent monooxygenase family. In terms of assembly, monomer. The cofactor is FAD.

In terms of biological role, FAD-dependent monooxygenase; part of the gene cluster that mediates the biosynthesis of the phomopsins, a group of hexapeptide mycotoxins which infects lupins and causes lupinosis disease in livestock. The role of phomE within the phomopsins biosynthesis pathway has still to be determined. The pathway starts with the processing of the precursor phomA by several endopeptidases including kexin proteases as well as the cluster-specific S41 family peptidase phomP1 and the oligopeptidase phomG to produce 10 identical copies of the hexapeptide Tyr-Val-Ile-Pro-Ile-Asp. After being excised from the precursor peptide, the core peptides are cyclized and modified post-translationally by enzymes encoded within the gene cluster. The timing and order of proteolysis of the phomA precursor and PTMs are still unknown. Two tyrosinase-like enzymes, phomQ1 and phomQ2, catalyze the chlorination and hydroxylation of Tyr, respectively. PhomYb, is proposed to be involved in the construction of the macrocyclic structure. The other 4 ustYa family proteins may be involved in PTMs that generate the unique structure of phomopsin A. PhomYa is required for the hydroxylation of C-beta of Tyr. PhomYc, phomYd, and phomYe are responsible for the biosynthesis of 2,3-dehydroisoleucine (dIle), 2,3-dehydroaspartic acid (dAsp), and 3,4-dehydroproline (dPro), respectively. While dIle formation by phomYc is indispensable for the installation of dAsp by phomYd, the order of the other PTMs have not been elucidated yet. Most of the biosynthetic enzymes likely have broad substrate specificity, and thus, there might be a metabolic grid from a precursor to phomopsin A. The enzyme(s) responsible for the biosynthesis of 3,4-dehydrovaline (dVal) have also not been identified yet. Finally, phomM acts as an S-adenosylmethionine-dependent alpha-N-methyltransferase that catalyzes two successive N-methylation reactions, converting N-desmethyl-phomopsin A to phomopsin A and phomopsin A further to an N,N-dimethylated congener called phomopsin E. The polypeptide is FAD-dependent monooxygenase phomE (Diaporthe leptostromiformis (Lupinosis disease fungus)).